A 350-amino-acid polypeptide reads, in one-letter code: tRNA uridine(34) hydroxylase (350 aa).

The Rhodanese domain maps to 146 to 240 (DDPDAVFIDM…YARRAREQGL (95 aa)). The active-site Cysteine persulfide intermediate is the Cys200. The span at 319–328 (RRRRAGRENG) shows a compositional bias: basic and acidic residues. Positions 319–350 (RRRRAGRENGNKIFNKSRGRLNSKLSIPDPAE) are disordered.

It belongs to the TrhO family.

It catalyses the reaction uridine(34) in tRNA + AH2 + O2 = 5-hydroxyuridine(34) in tRNA + A + H2O. Catalyzes oxygen-dependent 5-hydroxyuridine (ho5U) modification at position 34 in tRNAs. This is tRNA uridine(34) hydroxylase from Salmonella gallinarum (strain 287/91 / NCTC 13346).